A 249-amino-acid polypeptide reads, in one-letter code: 5'-nucleotidase SurE (249 aa).

A divalent metal cation-binding residues include D9, D10, S40, and N92.

This sequence belongs to the SurE nucleotidase family. A divalent metal cation serves as cofactor.

The protein resides in the cytoplasm. The catalysed reaction is a ribonucleoside 5'-phosphate + H2O = a ribonucleoside + phosphate. Nucleotidase that shows phosphatase activity on nucleoside 5'-monophosphates. The chain is 5'-nucleotidase SurE from Shewanella sp. (strain MR-4).